The chain runs to 264 residues: Segregation and condensation protein A (264 aa).

Belongs to the ScpA family. Component of a cohesin-like complex composed of ScpA, ScpB and the Smc homodimer, in which ScpA and ScpB bind to the head domain of Smc. The presence of the three proteins is required for the association of the complex with DNA.

It is found in the cytoplasm. Participates in chromosomal partition during cell division. May act via the formation of a condensin-like complex containing Smc and ScpB that pull DNA away from mid-cell into both cell halves. In Enterococcus faecalis (strain ATCC 700802 / V583), this protein is Segregation and condensation protein A.